Here is a 214-residue protein sequence, read N- to C-terminus: MRNSAPDADIGLVIAVKRLTAAKTRLAPVLSATNRESVVLAMLVDTIGAAITVPAVRSVLVVTPDDGAASAARRLGARVLADPTPAGHRDPLNNALSAAETAIREECSNIVVLQGDLPALKSIELAEALHAARAHPRSFVTDRHGTGTAALFAFGVALQPRFGAGSAQRHRESGAVELTGDWPGLRSDIDTPEDLVAACELGVGPATSQAISAA.

The phosphoenolpyruvate site is built by Thr-148, Gly-163, and Ser-166.

The protein belongs to the CofC family.

The enzyme catalyses phosphoenolpyruvate + GTP + H(+) = enolpyruvoyl-2-diphospho-5'-guanosine + diphosphate. It functions in the pathway cofactor biosynthesis; coenzyme F420 biosynthesis. Functionally, guanylyltransferase that catalyzes the activation of phosphoenolpyruvate (PEP) as enolpyruvoyl-2-diphospho-5'-guanosine, via the condensation of PEP with GTP. It is involved in the biosynthesis of coenzyme F420, a hydride carrier cofactor. This Mycolicibacterium gilvum (strain PYR-GCK) (Mycobacterium gilvum (strain PYR-GCK)) protein is Phosphoenolpyruvate guanylyltransferase.